A 396-amino-acid chain; its full sequence is Probable sugar efflux transporter (396 aa).

The next 12 helical transmembrane spans lie at Val-15–Leu-35, Val-50–Leu-70, Leu-81–Phe-101, Val-103–Ala-123, Ala-136–Ile-156, Thr-169–Pro-189, Pro-209–Tyr-229, Phe-246–Gly-266, Leu-275–Ala-295, Leu-301–Val-321, Val-333–Gly-353, and Thr-364–Phe-384.

It belongs to the major facilitator superfamily. SotB (TC 2.A.1.2) family.

The protein localises to the cell inner membrane. Functionally, involved in the efflux of sugars. The physiological role may be the reduction of the intracellular concentration of toxic sugars or sugar metabolites. This Salmonella arizonae (strain ATCC BAA-731 / CDC346-86 / RSK2980) protein is Probable sugar efflux transporter.